We begin with the raw amino-acid sequence, 274 residues long: UPF0758 protein RHE_CH01848 (274 aa).

The disordered stretch occupies residues 1-37; it reads MAKGPVATSSDDELPFETEEPVADERSFFGGRPQKPA. The segment covering 10–22 has biased composition (acidic residues); sequence SDDELPFETEEPV. The region spanning 152–274 is the MPN domain; that stretch reads VLSSWSSVIQ…HVSLKGLKLI (123 aa). The Zn(2+) site is built by histidine 223, histidine 225, and aspartate 236. A JAMM motif motif is present at residues 223–236; sequence HNHPSGDPTPSRAD.

This sequence belongs to the UPF0758 family.

The protein is UPF0758 protein RHE_CH01848 of Rhizobium etli (strain ATCC 51251 / DSM 11541 / JCM 21823 / NBRC 15573 / CFN 42).